The following is a 119-amino-acid chain: Immunoglobulin heavy variable 3-73 (119 aa).

The signal sequence occupies residues 1–19; sequence MEFGLSWVFLVAILKGVQC. Positions 20–44 are framework-1; the sequence is EVQLVESGGGLVQPGGSLKLSCAAS. The Ig-like domain occupies 20-119; that stretch reads EVQLVESGGG…EDTAVYYCTR (100 aa). The cysteines at positions 41 and 117 are disulfide-linked. Positions 45 to 52 are complementarity-determining-1; sequence GFTFSGSA. Residues 53–69 are framework-2; it reads MHWVRQASGKGLEWVGR. The segment at 70-79 is complementarity-determining-2; it reads IRSKANSYAT. Residues 80–117 form a framework-3 region; it reads AYAASVKGRFTISRDDSKNTAYLQMNSLKTEDTAVYYC. Residues 118-119 form a complementarity-determining-3 region; it reads TR.

As to quaternary structure, immunoglobulins are composed of two identical heavy chains and two identical light chains; disulfide-linked.

The protein localises to the secreted. Its subcellular location is the cell membrane. V region of the variable domain of immunoglobulin heavy chains that participates in the antigen recognition. Immunoglobulins, also known as antibodies, are membrane-bound or secreted glycoproteins produced by B lymphocytes. In the recognition phase of humoral immunity, the membrane-bound immunoglobulins serve as receptors which, upon binding of a specific antigen, trigger the clonal expansion and differentiation of B lymphocytes into immunoglobulins-secreting plasma cells. Secreted immunoglobulins mediate the effector phase of humoral immunity, which results in the elimination of bound antigens. The antigen binding site is formed by the variable domain of one heavy chain, together with that of its associated light chain. Thus, each immunoglobulin has two antigen binding sites with remarkable affinity for a particular antigen. The variable domains are assembled by a process called V-(D)-J rearrangement and can then be subjected to somatic hypermutations which, after exposure to antigen and selection, allow affinity maturation for a particular antigen. This is Immunoglobulin heavy variable 3-73 from Homo sapiens (Human).